The chain runs to 200 residues: Imidazoleglycerol-phosphate dehydratase (200 aa).

This sequence belongs to the imidazoleglycerol-phosphate dehydratase family.

The protein resides in the cytoplasm. It catalyses the reaction D-erythro-1-(imidazol-4-yl)glycerol 3-phosphate = 3-(imidazol-4-yl)-2-oxopropyl phosphate + H2O. It participates in amino-acid biosynthesis; L-histidine biosynthesis; L-histidine from 5-phospho-alpha-D-ribose 1-diphosphate: step 6/9. This is Imidazoleglycerol-phosphate dehydratase from Prosthecochloris aestuarii (strain DSM 271 / SK 413).